The primary structure comprises 252 residues: 5-oxoprolinase subunit A (252 aa).

This sequence belongs to the LamB/PxpA family. Forms a complex composed of PxpA, PxpB and PxpC.

It carries out the reaction 5-oxo-L-proline + ATP + 2 H2O = L-glutamate + ADP + phosphate + H(+). In terms of biological role, catalyzes the cleavage of 5-oxoproline to form L-glutamate coupled to the hydrolysis of ATP to ADP and inorganic phosphate. The protein is 5-oxoprolinase subunit A of Kocuria rhizophila (strain ATCC 9341 / DSM 348 / NBRC 103217 / DC2201).